A 334-amino-acid polypeptide reads, in one-letter code: Fructose-1,6-bisphosphatase class 1 (334 aa).

4 residues coordinate Mg(2+): glutamate 89, aspartate 112, leucine 114, and aspartate 115. Residues 115 to 118, asparagine 208, tyrosine 241, and lysine 271 each bind substrate; that span reads DGSS. Glutamate 277 serves as a coordination point for Mg(2+).

It belongs to the FBPase class 1 family. Homotetramer. It depends on Mg(2+) as a cofactor.

It is found in the cytoplasm. It catalyses the reaction beta-D-fructose 1,6-bisphosphate + H2O = beta-D-fructose 6-phosphate + phosphate. It participates in carbohydrate biosynthesis; gluconeogenesis. In Serratia proteamaculans (strain 568), this protein is Fructose-1,6-bisphosphatase class 1.